A 357-amino-acid polypeptide reads, in one-letter code: Chorismate synthase (357 aa).

Residue Arg47 coordinates NADP(+). FMN-binding positions include 123–125 (RAS), Gly281, 296–300 (KPTSS), and Arg324.

It belongs to the chorismate synthase family. Homotetramer. FMNH2 is required as a cofactor.

The enzyme catalyses 5-O-(1-carboxyvinyl)-3-phosphoshikimate = chorismate + phosphate. It functions in the pathway metabolic intermediate biosynthesis; chorismate biosynthesis; chorismate from D-erythrose 4-phosphate and phosphoenolpyruvate: step 7/7. Catalyzes the anti-1,4-elimination of the C-3 phosphate and the C-6 proR hydrogen from 5-enolpyruvylshikimate-3-phosphate (EPSP) to yield chorismate, which is the branch point compound that serves as the starting substrate for the three terminal pathways of aromatic amino acid biosynthesis. This reaction introduces a second double bond into the aromatic ring system. This is Chorismate synthase from Chlamydia trachomatis serovar D (strain ATCC VR-885 / DSM 19411 / UW-3/Cx).